We begin with the raw amino-acid sequence, 1382 residues long: Hepatocyte growth factor receptor (1382 aa).

An N-terminal signal peptide occupies residues Met-1 to Gly-24. Topologically, residues Glu-25–Thr-933 are extracellular. The 490-residue stretch at Lys-27–Leu-516 folds into the Sema domain. The N-linked (GlcNAc...) asparagine glycan is linked to Asn-45. Disulfide bonds link Cys-95-Cys-101, Cys-98-Cys-160, Cys-133-Cys-141, and Cys-173-Cys-176. An N-linked (GlcNAc...) asparagine glycan is attached at Asn-106. N-linked (GlcNAc...) asparagine glycosylation occurs at Asn-149. N-linked (GlcNAc...) asparagine glycosylation is found at Asn-203 and Asn-359. 2 disulfides stabilise this stretch: Cys-299–Cys-364 and Cys-386–Cys-398. 2 N-linked (GlcNAc...) asparagine glycosylation sites follow: Asn-400 and Asn-406. 4 disulfides stabilise this stretch: Cys-521-Cys-539, Cys-527-Cys-562, Cys-530-Cys-546, and Cys-542-Cys-552. IPT/TIG domains follow at residues Pro-564–Val-656, Pro-658–Arg-740, and Pro-743–Val-837. An O-linked (Man) threonine glycan is attached at Thr-583. Asn-608 and Asn-636 each carry an N-linked (GlcNAc...) asparagine glycan. O-linked (Man) threonine glycans are attached at residues Thr-677 and Thr-762. N-linked (GlcNAc...) asparagine glycosylation is found at Asn-786, Asn-880, and Asn-931. A helical membrane pass occupies residues Gly-934 to Leu-956. Topologically, residues Lys-957–Thr-1382 are cytoplasmic. At Ser-967 the chain carries Phosphoserine. Position 978 is a phosphothreonine (Thr-978). A phosphoserine mark is found at Ser-991, Ser-998, and Ser-1001. Phosphotyrosine is present on Tyr-1004. The region spanning Val-1079 to Ile-1346 is the Protein kinase domain. Residues Ile-1085–Val-1093 and Lys-1111 contribute to the ATP site. The active-site Proton acceptor is Asp-1205. The segment at Leu-1213 to Thr-1382 is interaction with RANBP9. A Phosphotyrosine modification is found at Tyr-1231. Residues Tyr-1235 and Tyr-1236 each carry the phosphotyrosine; by autocatalysis modification. Thr-1290 is modified (phosphothreonine). Residues Trp-1321 to Val-1360 are interaction with MUC20. Phosphotyrosine; by autocatalysis occurs at positions 1350 and 1357. Phosphotyrosine is present on Tyr-1366.

It belongs to the protein kinase superfamily. Tyr protein kinase family. Heterodimer made of an alpha chain (50 kDa) and a beta chain (145 kDa) which are disulfide linked. Binds PLXNB1. Interacts when phosphorylated with downstream effectors including STAT3, PIK3R1, SRC, PCLG1, GRB2 and GAB1. Interacts with SPSB1, SPSB2 and SPSB4. Interacts with INPP5D/SHIP1. When phosphorylated at Tyr-1357, interacts with INPPL1/SHIP2. Interacts with RANBP9 and RANBP10, as well as SPSB1, SPSB2, SPSB3 and SPSB4. SPSB1 binding occurs in the presence and in the absence of HGF, however HGF treatment has a positive effect on this interaction. Interacts with MUC20; prevents interaction with GRB2 and suppresses hepatocyte growth factor-induced cell proliferation. Interacts with GRB10. Interacts with PTPN1 and PTPN2. Interacts with HSP90AA1 and HSP90AB1; the interaction suppresses MET kinase activity. Interacts with tensin TNS3. Interacts (when phosphorylated) with tensin TNS4 (via SH2 domain); the interaction increases MET protein stability by inhibiting MET endocytosis and subsequent lysosomal degradation. Autophosphorylated in response to ligand binding on Tyr-1235 and Tyr-1236 in the kinase domain leading to further phosphorylation of Tyr-1350 and Tyr-1357 in the C-terminal multifunctional docking site. Dephosphorylated by PTPRJ at Tyr-1350 and Tyr-1366. Dephosphorylated by PTPN1 and PTPN2. In terms of processing, ubiquitinated. Ubiquitination by CBL regulates the receptor stability and activity through proteasomal degradation. Post-translationally, O-mannosylation of IPT/TIG domains by TMEM260 is required for protein maturation. O-mannosylated residues are composed of single mannose glycans that are not elongated or modified.

The protein localises to the membrane. The enzyme catalyses L-tyrosyl-[protein] + ATP = O-phospho-L-tyrosyl-[protein] + ADP + H(+). Its activity is regulated as follows. In its inactive state, the C-terminal tail interacts with the catalytic domain and inhibits the kinase activity. Upon ligand binding, the C-terminal tail is displaced and becomes phosphorylated, thus increasing the kinase activity. Functionally, receptor tyrosine kinase that transduces signals from the extracellular matrix into the cytoplasm by binding to hepatocyte growth factor/HGF ligand. Regulates many physiological processes including proliferation, scattering, morphogenesis and survival. Ligand binding at the cell surface induces autophosphorylation of MET on its intracellular domain that provides docking sites for downstream signaling molecules. Following activation by ligand, interacts with the PI3-kinase subunit PIK3R1, PLCG1, SRC, GRB2, STAT3 or the adapter GAB1. Recruitment of these downstream effectors by MET leads to the activation of several signaling cascades including the RAS-ERK, PI3 kinase-AKT, or PLCgamma-PKC. The RAS-ERK activation is associated with the morphogenetic effects while PI3K/AKT coordinates prosurvival effects. During embryonic development, MET signaling plays a role in gastrulation, development and migration of muscles and neuronal precursors, angiogenesis and kidney formation. In adults, participates in wound healing as well as organ regeneration and tissue remodeling. Also promotes differentiation and proliferation of hematopoietic cells. The sequence is that of Hepatocyte growth factor receptor (MET) from Muntiacus muntjak (Barking deer).